A 555-amino-acid polypeptide reads, in one-letter code: Aerobic glycerol-3-phosphate dehydrogenase (555 aa).

FAD is bound at residue 24–52 (DLFIIGGGITGAGTALDAASRGMKVALSE).

The protein belongs to the FAD-dependent glycerol-3-phosphate dehydrogenase family. It depends on FAD as a cofactor.

It is found in the cytoplasm. The enzyme catalyses a quinone + sn-glycerol 3-phosphate = dihydroxyacetone phosphate + a quinol. Its pathway is polyol metabolism; glycerol degradation via glycerol kinase pathway; glycerone phosphate from sn-glycerol 3-phosphate (aerobic route): step 1/1. The sequence is that of Aerobic glycerol-3-phosphate dehydrogenase (glpD) from Bacillus subtilis (strain 168).